The sequence spans 276 residues: MPEMPEVETVRRTLIPLIKGKTIEKVILWYPKIVATDHEKFLSELPGKKIIDIDRYAKYLLIRLSDNLTIVSHLRMEGKYHLTTSDAPKDKHDHVEFIFTDGTALRYNDVRKFGRMQLILTGTERQTTGIGKLGYEPNSSEFTSEYLVNGLKRKKKNIKNTLLDQSVVAGLGNIYVDEVLWRTKIHPLSQANKIPAEKVMELHDQINQIITEAIKLQGTTVHSFLNANGQVGGFQSKLQVYGHVGEPCPVCGTKFEKIKVNGRGTTFCPHCQVIYK.

Proline 2 functions as the Schiff-base intermediate with DNA in the catalytic mechanism. Glutamate 3 serves as the catalytic Proton donor. Lysine 58 functions as the Proton donor; for beta-elimination activity in the catalytic mechanism. 3 residues coordinate DNA: histidine 92, arginine 111, and lysine 154. The FPG-type zinc finger occupies 239–273 (QVYGHVGEPCPVCGTKFEKIKVNGRGTTFCPHCQV). Arginine 263 acts as the Proton donor; for delta-elimination activity in catalysis.

This sequence belongs to the FPG family. In terms of assembly, monomer. Requires Zn(2+) as cofactor.

It carries out the reaction Hydrolysis of DNA containing ring-opened 7-methylguanine residues, releasing 2,6-diamino-4-hydroxy-5-(N-methyl)formamidopyrimidine.. It catalyses the reaction 2'-deoxyribonucleotide-(2'-deoxyribose 5'-phosphate)-2'-deoxyribonucleotide-DNA = a 3'-end 2'-deoxyribonucleotide-(2,3-dehydro-2,3-deoxyribose 5'-phosphate)-DNA + a 5'-end 5'-phospho-2'-deoxyribonucleoside-DNA + H(+). Involved in base excision repair of DNA damaged by oxidation or by mutagenic agents. Acts as a DNA glycosylase that recognizes and removes damaged bases. Has a preference for oxidized purines, such as 7,8-dihydro-8-oxoguanine (8-oxoG). Has AP (apurinic/apyrimidinic) lyase activity and introduces nicks in the DNA strand. Cleaves the DNA backbone by beta-delta elimination to generate a single-strand break at the site of the removed base with both 3'- and 5'-phosphates. The sequence is that of Formamidopyrimidine-DNA glycosylase from Lactobacillus helveticus (strain DPC 4571).